An 809-amino-acid polypeptide reads, in one-letter code: H(+)/Cl(-) exchange transporter 7 (809 aa).

Over 1–130 (MANVSKKVSW…TAFRTVEIKR (130 aa)) the chain is Cytoplasmic. 2 positions are modified to phosphoserine: Ser-9 and Ser-64. Transmembrane regions (helical) follow at residues 131–163 (WVICAMVGILTGLVACFIDIVVEKLAGLKYRLV) and 178–201 (FSLLLWAALNAAFVLLGSTIVAFI). The short motif at 207–211 (GSGIP) is the Selectivity filter part_1 element. Ser-208 lines the chloride pocket. The helical intramembrane region spans 210 to 217 (IPQIKCFL). The next 2 helical transmembrane spans lie at 227–245 (RLKTLVIKVSGVILSVVGG) and 251–268 (EGPMIHSGSVIAAGISQG). The short motif at 249-253 (GKEGP) is the Selectivity filter part_2 element. 2 consecutive intramembrane regions (helical) follow at residues 292-304 (FVSAGAAAGVSAA) and 308-316 (PVGGVLFSL). The next 5 membrane-spanning stretches (helical) occupy residues 326-345 (FLTWRIFFASMISTFTLNFV), 379-409 (IPIFIAMGVVGGILGAVFNALNYWLTMFRIR), 414-436 (PCLQVVEATLVAAVTATAAFVLI), 491-511 (PMTLGLFTLVYFFLACWTYGL), and 516-539 (GVFIPSLLIGAAWGRLFGISLSYI). The Selectivity filter part_3 signature appears at 516-520 (GVFIP). Phe-518 is a binding site for chloride. The helical intramembrane region spans 549–563 (GKYALMGAAAQLGGI). Positions 564–566 (VRM) form an intramembrane region, note=Loop between two helices. Residues 567–578 (TLSLTVIMMEAT) constitute an intramembrane region (helical). The segment at residues 579-582 (SSVT) is an intramembrane region (note=Loop between two helices). The helical transmembrane segment at 583-601 (YGFPIMLVLMTAKIVGDVF) threads the bilayer. The Cytoplasmic segment spans residues 602 to 809 (IEGLYDMHIQ…GLEELSLAQT (208 aa)). Tyr-606 lines the chloride pocket. CBS domains are found at residues 635 to 699 (MSTP…VFVE) and 745 to 803 (MNPS…GLEE). Residues 662-664 (HNG) and 787-790 (TRKD) each bind ATP. Ser-805 carries the post-translational modification Phosphoserine.

Belongs to the chloride channel (TC 2.A.49) family. ClC-7/CLCN7 subfamily. In terms of assembly, chloride channel 7 are heteromers of alpha (CLCN7) and beta (OSTM1) subunits.

It is found in the lysosome membrane. It carries out the reaction 2 chloride(in) + H(+)(out) = 2 chloride(out) + H(+)(in). Its function is as follows. Slowly voltage-gated channel mediating the exchange of chloride ions against protons. Functions as antiporter and contributes to the acidification of the lysosome lumen and may be involved in maintaining lysosomal pH. The CLC channel family contains both chloride channels and proton-coupled anion transporters that exchange chloride or another anion for protons. The presence of conserved gating glutamate residues is typical for family members that function as antiporters. In Bos taurus (Bovine), this protein is H(+)/Cl(-) exchange transporter 7 (CLCN7).